Here is a 395-residue protein sequence, read N- to C-terminus: Flap endonuclease 1 (395 aa).

Positions 1–108 (MGILGLSKLL…DELEMRRQKA (108 aa)) are N-domain. Mg(2+) is bound at residue Asp-34. Position 74 (Arg-74) interacts with DNA. Asp-90 provides a ligand contact to Mg(2+). Residues 116–136 (EKAKDAGDDEMMEKMSKRTVR) are disordered. Residues 126-257 (MMEKMSKRTV…QKAWEGIQRY (132 aa)) form an I-domain region. Glu-162, Glu-164, Asp-183, and Asp-185 together coordinate Mg(2+). Glu-162 lines the DNA pocket. DNA contacts are provided by Gly-235 and Asp-237. Asp-237 is a binding site for Mg(2+). The interaction with PCNA stretch occupies residues 340-348 (TQGRLDSFF).

It belongs to the XPG/RAD2 endonuclease family. FEN1 subfamily. In terms of assembly, interacts with PCNA. Three molecules of FEN1 bind to one PCNA trimer with each molecule binding to one PCNA monomer. PCNA stimulates the nuclease activity without altering cleavage specificity. It depends on Mg(2+) as a cofactor. Post-translationally, phosphorylated. Phosphorylation upon DNA damage induces relocalization to the nuclear plasma.

It localises to the nucleus. The protein resides in the nucleolus. It is found in the nucleoplasm. The protein localises to the mitochondrion. Its function is as follows. Structure-specific nuclease with 5'-flap endonuclease and 5'-3' exonuclease activities involved in DNA replication and repair. During DNA replication, cleaves the 5'-overhanging flap structure that is generated by displacement synthesis when DNA polymerase encounters the 5'-end of a downstream Okazaki fragment. It enters the flap from the 5'-end and then tracks to cleave the flap base, leaving a nick for ligation. Also involved in the long patch base excision repair (LP-BER) pathway, by cleaving within the apurinic/apyrimidinic (AP) site-terminated flap. Acts as a genome stabilization factor that prevents flaps from equilibrating into structures that lead to duplications and deletions. Also possesses 5'-3' exonuclease activity on nicked or gapped double-stranded DNA, and exhibits RNase H activity. Also involved in replication and repair of rDNA and in repairing mitochondrial DNA. This Leishmania major protein is Flap endonuclease 1.